Consider the following 228-residue polypeptide: Sensory transduction protein RegX3 (228 aa).

One can recognise a Response regulatory domain in the interval 3 to 116; it reads SVLIVEDEES…ELIARIRAVL (114 aa). A 4-aspartylphosphate modification is found at aspartate 52. Residues 129-228 constitute a DNA-binding region (ompR/PhoB-type); it reads DGVLEAGPVR…VRGLGYKLEG (100 aa).

Phosphorylated by SenX3.

Functionally, member of the two-component regulatory system SenX3/RegX3 involved in stress response. The system is involved in phosphate starvation response. Once phosphorylated by SenX3, activates the expression of the alkaline phosphatase phoA, the high-affinity phosphate transporter pstSCAB, phnDCE, phnF and senX3. May act as a negative regulator of NhaA. Acts by binding to a DNA motif consisting of an inverted repeat. In Mycolicibacterium smegmatis (strain ATCC 700084 / mc(2)155) (Mycobacterium smegmatis), this protein is Sensory transduction protein RegX3.